Reading from the N-terminus, the 239-residue chain is LexA repressor (239 aa).

The H-T-H motif DNA-binding region spans 26 to 46 (FDEMKDALDLKSKSGIHRLIT). Residues Ser160 and Lys198 each act as for autocatalytic cleavage activity in the active site.

Belongs to the peptidase S24 family. Homodimer.

The catalysed reaction is Hydrolysis of Ala-|-Gly bond in repressor LexA.. Its function is as follows. Represses a number of genes involved in the response to DNA damage (SOS response), including recA and lexA. In the presence of single-stranded DNA, RecA interacts with LexA causing an autocatalytic cleavage which disrupts the DNA-binding part of LexA, leading to derepression of the SOS regulon and eventually DNA repair. The chain is LexA repressor from Methylobacterium sp. (strain 4-46).